We begin with the raw amino-acid sequence, 698 residues long: Elongation factor G 1 (698 aa).

A tr-type G domain is found at 8 to 290; sequence ERYRNIGICA…AVVEFLPAPV (283 aa). GTP is bound by residues 17 to 24, 88 to 92, and 142 to 145; these read AHVDAGKT, DTPGH, and NKMD.

The protein belongs to the TRAFAC class translation factor GTPase superfamily. Classic translation factor GTPase family. EF-G/EF-2 subfamily.

It localises to the cytoplasm. In terms of biological role, catalyzes the GTP-dependent ribosomal translocation step during translation elongation. During this step, the ribosome changes from the pre-translocational (PRE) to the post-translocational (POST) state as the newly formed A-site-bound peptidyl-tRNA and P-site-bound deacylated tRNA move to the P and E sites, respectively. Catalyzes the coordinated movement of the two tRNA molecules, the mRNA and conformational changes in the ribosome. This Shewanella oneidensis (strain ATCC 700550 / JCM 31522 / CIP 106686 / LMG 19005 / NCIMB 14063 / MR-1) protein is Elongation factor G 1.